A 415-amino-acid chain; its full sequence is D-threonate kinase (415 aa).

Substrate contacts are provided by residues Asp9, Arg53, and 81-84 (KIDS). Residues Ser251, 345–348 (GGET), and Gly392 contribute to the ATP site.

It belongs to the four-carbon acid sugar kinase family.

The enzyme catalyses D-threonate + ATP = 4-O-phospho-D-threonate + ADP + H(+). Catalyzes the ATP-dependent phosphorylation of D-threonate to D-threonate 4-phosphate. Can also phosphorylate 4-hydroxy-L-threonine, with lower efficiency. This chain is D-threonate kinase, found in Cupriavidus necator (strain ATCC 17699 / DSM 428 / KCTC 22496 / NCIMB 10442 / H16 / Stanier 337) (Ralstonia eutropha).